The primary structure comprises 94 residues: Exodeoxyribonuclease 7 small subunit (94 aa).

The protein belongs to the XseB family. As to quaternary structure, heterooligomer composed of large and small subunits.

The protein localises to the cytoplasm. It carries out the reaction Exonucleolytic cleavage in either 5'- to 3'- or 3'- to 5'-direction to yield nucleoside 5'-phosphates.. In terms of biological role, bidirectionally degrades single-stranded DNA into large acid-insoluble oligonucleotides, which are then degraded further into small acid-soluble oligonucleotides. The protein is Exodeoxyribonuclease 7 small subunit of Trichormus variabilis (strain ATCC 29413 / PCC 7937) (Anabaena variabilis).